A 653-amino-acid polypeptide reads, in one-letter code: Aspartate--tRNA ligase, mitochondrial (653 aa).

The transit peptide at 1 to 46 directs the protein to the mitochondrion; that stretch reads MYLGFWLSRLCRGLSRPIGKTMRPIWGSLSRNLALSSQRIPEFSSF. Thr218 is subject to Phosphothreonine. Position 241 is a phosphoserine (Ser241). The tract at residues 243-246 is aspartate; it reads QQFK. Arg265 lines the L-aspartate pocket. ATP contacts are provided by residues 265–267 and Glu534; that span reads RDE. L-aspartate is bound at residue Arg541. Residue 583-586 coordinates ATP; the sequence is GLDR.

It belongs to the class-II aminoacyl-tRNA synthetase family. Type 1 subfamily. Homodimer.

The protein localises to the mitochondrion matrix. The protein resides in the mitochondrion membrane. The catalysed reaction is tRNA(Asp) + L-aspartate + ATP = L-aspartyl-tRNA(Asp) + AMP + diphosphate. Catalyzes the attachment of aspartate to tRNA(Asp) in a two-step reaction: aspartate is first activated by ATP to form Asp-AMP and then transferred to the acceptor end of tRNA(Asp). This is Aspartate--tRNA ligase, mitochondrial (Dars2) from Mus musculus (Mouse).